The chain runs to 310 residues: uncharacterized protein (310 aa).

Residues 269 to 307 adopt a coiled-coil conformation; it reads DLAELERKKSLAEIHKKAAMAKKREEKKKIKQELKKSAK. Positions 290–304 are enriched in basic and acidic residues; sequence KKREEKKKIKQELKK. Positions 290-310 are disordered; it reads KKREEKKKIKQELKKSAKGKK.

This is an uncharacterized protein from Magallana gigas (Pacific oyster).